The chain runs to 333 residues: Foldase protein PrsA (333 aa).

An N-terminal signal peptide occupies residues Met1–Ala22. Cys23 carries N-palmitoyl cysteine lipidation. Residue Cys23 is the site of S-diacylglycerol cysteine attachment. Residues Thr145 to Lys240 form the PpiC domain. Residues Asp301–Lys333 are disordered. A compositionally biased stretch (basic and acidic residues) spans Ser312–Lys322. Residues Asp323–Lys333 are compositionally biased toward low complexity.

It belongs to the PrsA family.

It is found in the cell membrane. It carries out the reaction [protein]-peptidylproline (omega=180) = [protein]-peptidylproline (omega=0). Functionally, plays a major role in protein secretion by helping the post-translocational extracellular folding of several secreted proteins. The sequence is that of Foldase protein PrsA from Streptococcus equi subsp. equi (strain 4047).